The primary structure comprises 107 residues: U1-lycotoxin-Ls1v (107 aa).

A signal peptide spans 1–20 (MMKVLVVVALLVTLISYSSS). Residues 21-41 (EGIDDLEADELLSLTANEQTR) constitute a propeptide that is removed on maturation. 4 cysteine pairs are disulfide-bonded: Cys44–Cys59, Cys51–Cys68, Cys58–Cys86, and Cys70–Cys84.

Belongs to the neurotoxin 19 (CSTX) family. 04 (U1-Lctx) subfamily. In terms of tissue distribution, expressed by the venom gland.

It localises to the secreted. The polypeptide is U1-lycotoxin-Ls1v (Lycosa singoriensis (Wolf spider)).